A 33-amino-acid polypeptide reads, in one-letter code: Alpha-amanitin proprotein 2 (33 aa).

A propeptide spanning residues 1-10 is cleaved from the precursor; the sequence is MSDINATRLP. Ile11 is modified ((3R,4R)-4,5-dihydroxyisoleucine; in form alpha-amanitin). Ile11 bears the (3R,4S)-4-hydroxyisoleucine; in form gamma-amanitin mark. The cyclopeptide (Ile-Pro) cross-link spans 11 to 18; sequence IWGIGCNP. The segment at residues 12 to 16 is a cross-link (2'-cysteinyl-6'-hydroxytryptophan sulfoxide (Trp-Cys)); the sequence is WGIGC. Residue Pro18 is modified to 4-hydroxyproline. Residues 19-33 constitute a propeptide that is removed on maturation; that stretch reads CVGDDVTSVLTRGEA.

Belongs to the MSDIN fungal toxin family. In terms of processing, processed by the macrocyclase-peptidase enzyme POPB to yield a toxic cyclic octapeptide. POPB first removes 10 residues from the N-terminus. Conformational trapping of the remaining peptide forces the enzyme to release this intermediate rather than proceed to macrocyclization. The enzyme rebinds the remaining peptide in a different conformation and catalyzes macrocyclization of the N-terminal 8 residues. As to expression, expressed in basidiocarps.

Functionally, major toxin belonging to the bicyclic octapeptides amatoxins that acts by binding non-competitively to RNA polymerase II and greatly slowing the elongation of transcripts from target promoters. This chain is Alpha-amanitin proprotein 2, found in Amanita exitialis (Guangzhou destroying angel).